Here is a 730-residue protein sequence, read N- to C-terminus: ATP-dependent DNA helicase Hel308 (730 aa).

ATP contacts are provided by residues Q28 and 46–53; that span reads IPTASGKT. The Helicase ATP-binding domain maps to 33 to 199; sequence EKGLLEGKNL…WLDAELVLSE (167 aa). Positions 144-147 match the DEAH box motif; the sequence is DEVH. Residues 232–433 enclose the Helicase C-terminal domain; it reads AVNLVLDTIK…ALRTHILSTI (202 aa).

This sequence belongs to the helicase family. Hel308 subfamily. As to quaternary structure, monomer.

The catalysed reaction is Couples ATP hydrolysis with the unwinding of duplex DNA by translocating in the 3'-5' direction.. It carries out the reaction ATP + H2O = ADP + phosphate + H(+). Functionally, DNA-dependent ATPase and 3'-5' DNA helicase that may be involved in repair of stalled replication forks. This chain is ATP-dependent DNA helicase Hel308, found in Methanosarcina mazei (strain ATCC BAA-159 / DSM 3647 / Goe1 / Go1 / JCM 11833 / OCM 88) (Methanosarcina frisia).